The primary structure comprises 575 residues: MYDVIVIGAGWCGLVAAKTYLQVCPDARLLLVDGDSSIGGTWSKERLYPHLVAEAHHGLFEFSDLPMRRDTVLPDGRIPSAAVHDYLTEYATKFDLIDRIRLNTWIENVRREPAVIGDNEAPRWMLTVAGSCEQIPTKKIIIATGLTSEPYMPFLPGRQEFEGEVLHSKALGHPQTGDRISDPSVRHAVVYGGSKSAFDAVYLLLRAGKTVDWVIREQGGGPSMMTPLSILGQPSFRLNNSRLLALFSPHPFDTTVKASWWQRVMHRRSGRLAQLAVIGFWRILAYLLQRPWKYNQSANGRRLRPLLALDSLFWSPATLGVMTHPELWDDIHSGERVTIHRQAITALGKDKRVILDNGVELSADLVVCATGWHARHTLFKPEEQLAVGLPSAVSFDPKSQSEWINLQRKADQEIIEEMPILQKSPVPSVPFRCEDDYHLYRFIAPSREPPSHERSIAYVGFLRTAGAPIVYEAQSLWATAYLTGALDVPGPSERISEVARTNAWIRRRYICGRKVPFALFDFLPYVDMLYRDLGVNPHRKANMVAEICGLYQPRDFQGVVSEWLASRGVKDIENV.

The signal sequence occupies residues 1-17; sequence MYDVIVIGAGWCGLVAA. I106 contributes to the FAD binding site. N239 and N295 each carry an N-linked (GlcNAc...) asparagine glycan.

It belongs to the FAD-binding monooxygenase family. Requires FAD as cofactor.

The protein operates within antifungal biosynthesis. Functionally, FAD-dependent monooxygenase; part of the gene cluster that mediates the biosynthesis of the tetrahydropyranyl antifungal agent restricticin that acts as an inhibitor of CYP51 and blocks the ergosterol biosynthesis. The highly reducing polyketide synthase rstn3, the short chain dehydrogenase rstn4, the cyclase rstn5, the FAD-dependent monooxygenase rstn6 and the enoylreductase rstn7 are required to generate the first stable intermediate desmethylrestrictinol. Rstn3 with rstn7 biosynthesize the first polyketide chain intermediate that is reduced by rstn4, followed by epoxidation by rstn6 before 6-endo cyclization via epoxide opening by rstn5 leads to desmethylrestrictinol. The methyltransferase rstn1 then catalyzes the C4 O-methylation of desmethylrestrictinol to produce restrictinol, and the nonribosomal peptide synthetase rstn8 catalyzes the C3 esterification of restrictinol with glycine that leads to restricticin. The protein is FAD-dependent monooxygenase rstn6 of Aspergillus nomiae NRRL (strain ATCC 15546 / NRRL 13137 / CBS 260.88 / M93).